Here is a 269-residue protein sequence, read N- to C-terminus: Chymotrypsin-like elastase family member 2A (269 aa).

The first 16 residues, 1 to 16 (MIRTLLLSTLVAGALS), serve as a signal peptide directing secretion. A propeptide spans 17 to 28 (CGDPTYPPYVTR) (activation peptide). In terms of domain architecture, Peptidase S1 spans 29-267 (VVGGEEARPN…YIDWINSVIA (239 aa)). Cysteine 58 and cysteine 74 are joined by a disulfide. Active-site charge relay system residues include histidine 73 and aspartate 121. 3 cysteine pairs are disulfide-bonded: cysteine 155-cysteine 222, cysteine 186-cysteine 202, and cysteine 212-cysteine 243. The Charge relay system role is filled by serine 216.

It belongs to the peptidase S1 family. Elastase subfamily. Interacts with CPA1. Interacts with SERPINA1. In terms of tissue distribution, expressed in pancreas. Not detected in keratinocytes. Detected in exocrine secretions of the pancreas (at protein level). Also expressed in a small fraction of cells in pancreatic islets, adrenal cortex, intestinal glands and colonic lymphoid follicles (at protein level). Detected in plasma.

The protein localises to the secreted. The catalysed reaction is Preferential cleavage: Leu-|-Xaa, Met-|-Xaa and Phe-|-Xaa. Hydrolyzes elastin.. Elastase that enhances insulin signaling and might have a physiologic role in cellular glucose metabolism. Circulates in plasma and reduces platelet hyperactivation, triggers both insulin secretion and degradation, and increases insulin sensitivity. This chain is Chymotrypsin-like elastase family member 2A, found in Homo sapiens (Human).